Reading from the N-terminus, the 120-residue chain is Large ribosomal subunit protein uL18 (120 aa).

The protein belongs to the universal ribosomal protein uL18 family. Part of the 50S ribosomal subunit; part of the 5S rRNA/L5/L18/L25 subcomplex. Contacts the 5S and 23S rRNAs.

In terms of biological role, this is one of the proteins that bind and probably mediate the attachment of the 5S RNA into the large ribosomal subunit, where it forms part of the central protuberance. The protein is Large ribosomal subunit protein uL18 of Treponema denticola (strain ATCC 35405 / DSM 14222 / CIP 103919 / JCM 8153 / KCTC 15104).